The sequence spans 420 residues: Tyrosine--tRNA ligase (420 aa).

Tyr-38 contributes to the L-tyrosine binding site. The 'HIGH' region signature appears at 43–52 (PTGDSLHIGH). Positions 169 and 173 each coordinate L-tyrosine. The 'KMSKS' region motif lies at 231–235 (KFGKS). Lys-234 contacts ATP. In terms of domain architecture, S4 RNA-binding spans 353 to 419 (KNLVDFLVDT…GKRKYTLVTI (67 aa)).

This sequence belongs to the class-I aminoacyl-tRNA synthetase family. TyrS type 1 subfamily. In terms of assembly, homodimer.

It is found in the cytoplasm. It carries out the reaction tRNA(Tyr) + L-tyrosine + ATP = L-tyrosyl-tRNA(Tyr) + AMP + diphosphate + H(+). In terms of biological role, catalyzes the attachment of tyrosine to tRNA(Tyr) in a two-step reaction: tyrosine is first activated by ATP to form Tyr-AMP and then transferred to the acceptor end of tRNA(Tyr). In Lactobacillus helveticus (strain DPC 4571), this protein is Tyrosine--tRNA ligase.